Consider the following 489-residue polypeptide: Serine/arginine-rich splicing factor 4 (489 aa).

The RRM 1 domain occupies proline 2–glycine 72. Disordered regions lie at residues glycine 72 to lysine 95 and lysine 169 to serine 489. Residues serine 78 and serine 84 each carry the phosphoserine modification. The RRM 2 domain maps to tyrosine 104–proline 177. Basic residues-rich tracts occupy residues serine 179–serine 206 and serine 214–lysine 246. Over residues serine 247–glutamine 279 the composition is skewed to basic and acidic residues. Serine 289, serine 291, and serine 293 each carry phosphoserine. A compositionally biased stretch (basic and acidic residues) spans serine 293–leucine 332. Basic residues predominate over residues leucine 333–arginine 356. 2 stretches are compositionally biased toward basic and acidic residues: residues serine 357–glutamate 370 and lysine 394–glycine 426. Phosphoserine occurs at positions 441, 453, and 455. 2 stretches are compositionally biased toward basic residues: residues arginine 456 to serine 469 and serine 479 to serine 489.

This sequence belongs to the splicing factor SR family. In terms of assembly, found in a pre-mRNA splicing complex with SRSF4/SFRS4, SRSF5/SFRS5, SNRNP70, SNRPA1, SRRM1 and SRRM2. Interacts with PNN. Extensively phosphorylated on serine residues in the RS domain.

Its subcellular location is the nucleus speckle. Its function is as follows. Plays a role in alternative splice site selection during pre-mRNA splicing. Represses the splicing of MAPT/Tau exon 10. The protein is Serine/arginine-rich splicing factor 4 (Srsf4) of Mus musculus (Mouse).